A 366-amino-acid chain; its full sequence is Aminomethyltransferase (366 aa).

It belongs to the GcvT family. In terms of assembly, the glycine cleavage system is composed of four proteins: P, T, L and H.

The catalysed reaction is N(6)-[(R)-S(8)-aminomethyldihydrolipoyl]-L-lysyl-[protein] + (6S)-5,6,7,8-tetrahydrofolate = N(6)-[(R)-dihydrolipoyl]-L-lysyl-[protein] + (6R)-5,10-methylene-5,6,7,8-tetrahydrofolate + NH4(+). Its function is as follows. The glycine cleavage system catalyzes the degradation of glycine. This is Aminomethyltransferase from Bacillus cereus (strain ZK / E33L).